A 213-amino-acid chain; its full sequence is Ribosomal RNA small subunit methyltransferase G (213 aa).

Residues Gly-75, Phe-80, Ile-128–Glu-129, and Arg-144 each bind S-adenosyl-L-methionine.

It belongs to the methyltransferase superfamily. RNA methyltransferase RsmG family.

The protein resides in the cytoplasm. The catalysed reaction is guanosine(527) in 16S rRNA + S-adenosyl-L-methionine = N(7)-methylguanosine(527) in 16S rRNA + S-adenosyl-L-homocysteine. Its function is as follows. Specifically methylates the N7 position of guanine in position 527 of 16S rRNA. This Brucella suis biovar 1 (strain 1330) protein is Ribosomal RNA small subunit methyltransferase G.